We begin with the raw amino-acid sequence, 120 residues long: Flagellar protein FliT (120 aa).

The required for homodimerization stretch occupies residues 1 to 50 (MERHQHLLSEYQQILTLSEQMLMLATVENWNTLVDLEMTYLKAVENTANI). The fliD binding stretch occupies residues 60-98 (LQELLRQKLRSILENEIEIKRLLQRRLDKLSELVGQSTR).

Belongs to the FliT family. In terms of assembly, homodimer. Interacts with FliD and FlhC.

It localises to the cytoplasm. Its subcellular location is the cytosol. Its function is as follows. Dual-function protein that regulates the transcription of class 2 flagellar operons and that also acts as an export chaperone for the filament-capping protein FliD. As a transcriptional regulator, acts as an anti-FlhDC factor; it directly binds FlhC, thus inhibiting the binding of the FlhC/FlhD complex to class 2 promoters, resulting in decreased expression of class 2 flagellar operons. As a chaperone, effects FliD transition to the membrane by preventing its premature polymerization, and by directing it to the export apparatus. The polypeptide is Flagellar protein FliT (Yersinia pestis (strain Pestoides F)).